The sequence spans 283 residues: NAD kinase (283 aa).

Residue Asp-67 is the Proton acceptor of the active site. NAD(+)-binding positions include 67–68 (DG), 141–142 (ND), Arg-152, Asp-171, 182–187 (TAYSLS), and Gln-241.

Belongs to the NAD kinase family. A divalent metal cation serves as cofactor.

It is found in the cytoplasm. The enzyme catalyses NAD(+) + ATP = ADP + NADP(+) + H(+). In terms of biological role, involved in the regulation of the intracellular balance of NAD and NADP, and is a key enzyme in the biosynthesis of NADP. Catalyzes specifically the phosphorylation on 2'-hydroxyl of the adenosine moiety of NAD to yield NADP. In Heliobacterium modesticaldum (strain ATCC 51547 / Ice1), this protein is NAD kinase.